We begin with the raw amino-acid sequence, 850 residues long: Protein translocase subunit SecA 2 (850 aa).

Residues glutamine 83, 101–105 (GEGKT), and aspartate 491 contribute to the ATP site.

Belongs to the SecA family. Monomer and homodimer. Part of the essential Sec protein translocation apparatus which comprises SecA, SecYEG and auxiliary proteins SecDF. Other proteins may also be involved.

The protein localises to the cell membrane. It localises to the cytoplasm. It catalyses the reaction ATP + H2O + cellular proteinSide 1 = ADP + phosphate + cellular proteinSide 2.. In terms of biological role, part of the Sec protein translocase complex. Interacts with the SecYEG preprotein conducting channel. Has a central role in coupling the hydrolysis of ATP to the transfer of proteins into and across the cell membrane, serving as an ATP-driven molecular motor driving the stepwise translocation of polypeptide chains across the membrane. This Mycolicibacterium vanbaalenii (strain DSM 7251 / JCM 13017 / BCRC 16820 / KCTC 9966 / NRRL B-24157 / PYR-1) (Mycobacterium vanbaalenii) protein is Protein translocase subunit SecA 2.